A 324-amino-acid chain; its full sequence is Putative transport protein TM_1187 (324 aa).

The next 8 membrane-spanning stretches (helical) occupy residues Leu-12–Ile-32, Ile-62–Ile-82, Ile-105–Leu-125, Ile-131–Ile-151, Gly-190–Phe-210, Phe-227–Val-247, Gly-252–Ala-272, and Phe-285–Ile-305.

It belongs to the autoinducer-2 exporter (AI-2E) (TC 2.A.86) family.

It is found in the cell membrane. The polypeptide is Putative transport protein TM_1187 (Thermotoga maritima (strain ATCC 43589 / DSM 3109 / JCM 10099 / NBRC 100826 / MSB8)).